A 136-amino-acid polypeptide reads, in one-letter code: NADPH-dependent 7-cyano-7-deazaguanine reductase (136 aa).

C53 functions as the Thioimide intermediate in the catalytic mechanism. The Proton donor role is filled by D60. Substrate contacts are provided by residues 75 to 77 (VEL) and 94 to 95 (HE).

Belongs to the GTP cyclohydrolase I family. QueF type 1 subfamily.

It is found in the cytoplasm. The enzyme catalyses 7-aminomethyl-7-carbaguanine + 2 NADP(+) = 7-cyano-7-deazaguanine + 2 NADPH + 3 H(+). Its pathway is tRNA modification; tRNA-queuosine biosynthesis. Its function is as follows. Catalyzes the NADPH-dependent reduction of 7-cyano-7-deazaguanine (preQ0) to 7-aminomethyl-7-deazaguanine (preQ1). The polypeptide is NADPH-dependent 7-cyano-7-deazaguanine reductase (Nostoc sp. (strain PCC 7120 / SAG 25.82 / UTEX 2576)).